The sequence spans 286 residues: Protein FAM87A (286 aa).

2 consecutive transmembrane segments (helical) span residues 68–88 (YLHSSLFLSILFQVTLLETAL) and 161–181 (SFFVVFQAWSLMILQVLGDML).

The protein belongs to the FAM87 family.

The protein localises to the membrane. The polypeptide is Protein FAM87A (FAM87A) (Homo sapiens (Human)).